The sequence spans 293 residues: 4-hydroxy-tetrahydrodipicolinate synthase (293 aa).

Threonine 47 provides a ligand contact to pyruvate. Tyrosine 136 serves as the catalytic Proton donor/acceptor. Catalysis depends on lysine 164, which acts as the Schiff-base intermediate with substrate. A pyruvate-binding site is contributed by isoleucine 206.

The protein belongs to the DapA family. Homotetramer; dimer of dimers.

The protein localises to the cytoplasm. It carries out the reaction L-aspartate 4-semialdehyde + pyruvate = (2S,4S)-4-hydroxy-2,3,4,5-tetrahydrodipicolinate + H2O + H(+). The protein operates within amino-acid biosynthesis; L-lysine biosynthesis via DAP pathway; (S)-tetrahydrodipicolinate from L-aspartate: step 3/4. Its function is as follows. Catalyzes the condensation of (S)-aspartate-beta-semialdehyde [(S)-ASA] and pyruvate to 4-hydroxy-tetrahydrodipicolinate (HTPA). This is 4-hydroxy-tetrahydrodipicolinate synthase from Listeria monocytogenes serovar 1/2a (strain ATCC BAA-679 / EGD-e).